Reading from the N-terminus, the 1682-residue chain is Sodium channel protein type 7 subunit alpha (1682 aa).

Over 1–117 the chain is Cytoplasmic; it reads MLASPEPKGL…RRTTIKVLVH (117 aa). Residues 100–401 form an I repeat; that stretch reads TLSPFNCIRR…ILAMAYEEEK (302 aa). The chain crosses the membrane as a helical span at residues 118 to 137; it reads PFFQLFILISVLIDCVFMSL. Over 138 to 141 the chain is Extracellular; it reads TNLP. A helical membrane pass occupies residues 142–167; that stretch reads KWRPVLENTLLGIYTFEILVKLFARG. The Cytoplasmic portion of the chain corresponds to 168-178; sequence VWAGSFSFLGD. The helical transmembrane segment at 179 to 196 threads the bilayer; sequence PWNWLDFSVTVFEVIIRY. Topologically, residues 197-200 are extracellular; that stretch reads SPLD. The helical transmembrane segment at 201–219 threads the bilayer; it reads FIPTLQTARTLRILKIIPL. Over 220–237 the chain is Cytoplasmic; sequence NQGLKSLVGVLIHCLKQL. The chain crosses the membrane as a helical span at residues 238-259; sequence IGVIILTLFFLSIFSLIGMGLF. Over 260-338 the chain is Extracellular; it reads MGNLKHKCFR…PDQGFTNFDS (79 aa). C267 and C307 are disulfide-bonded. N276, N281, and N309 each carry an N-linked (GlcNAc...) asparagine glycan. Positions 339-366 form an intramembrane region, pore-forming; that stretch reads FGWALFALFRLMAQDYPEVLYHQILYAS. Position 367 (G367) is a topological domain, extracellular. Residues 368–407 traverse the membrane as a helical segment; the sequence is KVYMIFFVVVSFLFSFYMASLFLGILAMAYEEEKQRVGEI. The Cytoplasmic segment spans residues 408-505; that stretch reads SKKIEPKFQQ…EFVHRIIMAP (98 aa). S442 carries the phosphoserine; by PKA modification. The stretch at 487 to 758 is one II repeat; sequence CSPCWLKLKE…QLAVARIKKG (272 aa). A helical membrane pass occupies residues 506–521; sequence FTDLFLIICIILNVCF. Over 522-530 the chain is Extracellular; it reads LTLEHYPMS. A helical transmembrane segment spans residues 531–559; sequence KQTNTLLNIGNLVFIGIFTAEMIFKIIAM. Residues 560 to 568 lie on the Cytoplasmic side of the membrane; the sequence is HPYGYFQVG. Residues 569 to 586 form a helical membrane-spanning segment; it reads WNIFDSMIVFHGLIELCL. Residues 587 to 592 are Extracellular-facing; that stretch reads ANVAGM. A helical transmembrane segment spans residues 593–609; it reads ALLRLFRMLRIFKLGKY. At 610 to 626 the chain is on the cytoplasmic side; it reads WPTFQILMWSLSNSWVA. The chain crosses the membrane as a helical span at residues 627–655; it reads LKDLVLLLFTFIFFSAAFGMKLFGKNYEE. Topologically, residues 656-673 are extracellular; sequence FVCHIDKDCQLPRWHMHD. 2 cysteine pairs are disulfide-bonded: C658/C664 and C696/C705. The pore-forming intramembrane region spans 674 to 700; that stretch reads FFHSFLNVFRILCGEWVETLWDCMEVA. A topological domain (extracellular) is located at residue G701. Residues 702–732 traverse the membrane as a helical segment; sequence QSWCIPFYLMVILIGNLLVLYLFLALVSSFS. The Cytoplasmic segment spans residues 733–934; that stretch reads SCKDVTAEEN…KTCCKIVENN (202 aa). T777 is modified (phosphothreonine; by PKA). Positions 801–871 are disordered; it reads TQDFLKDKEK…SKEKIKQSSS (71 aa). Basic and acidic residues predominate over residues 804–819; sequence FLKDKEKSSGTEKNAT. A compositionally biased stretch (polar residues) spans 820–834; sequence ENESQSLIPSPSVSE. A Phosphoserine modification is found at S843. Phosphoserine; by PKA occurs at positions 869 and 905. The stretch at 916–1224 is one III repeat; the sequence is KGKIWQNIRK…RKQYRRLKKL (309 aa). Residues 935-953 traverse the membrane as a helical segment; it reads WFKCFIGLVTLLSTGTLAF. Residues 954-961 lie on the Extracellular side of the membrane; sequence EDIYMDQR. The chain crosses the membrane as a helical span at residues 962-990; sequence KTIKILLEYADMIFTYIFILEMLLKWMAY. Topologically, residues 991–998 are cytoplasmic; the sequence is GFKAYFSN. The helical transmembrane segment at 999 to 1020 threads the bilayer; sequence GWYRLDFVVVIVFCLSLIGKTR. E1021 is a topological domain (extracellular). Residues 1022-1040 traverse the membrane as a helical segment; that stretch reads ELKPLISMKFLRPLRVLSQ. At 1041 to 1055 the chain is on the cytoplasmic side; it reads FERMKVVVRALIKTT. A helical transmembrane segment spans residues 1056-1080; sequence LPTLNVFLVCLMIWLIFSIMGVDLF. The Extracellular portion of the chain corresponds to 1081–1127; that stretch reads AGRFYECIDPTSGERFPSSEVMNKSRCESLLFNESMLWENAKMNFDN. Residues C1087 and C1107 are joined by a disulfide bond. N-linked (GlcNAc...) asparagine glycosylation is found at N1103 and N1113. Positions 1128–1154 form an intramembrane region, pore-forming; the sequence is VGNGFLSLLQVATFNGWITIMNSAIDS. Residues 1155-1167 lie on the Extracellular side of the membrane; sequence VAVNIQPHFEVNI. Residues 1168 to 1202 traverse the membrane as a helical segment; the sequence is YMYCYFINFIIFGVFLPLSMLITVIIDNFNKHKIK. Residues 1203–1250 are Cytoplasmic-facing; sequence LGGSNIFITVKQRKQYRRLKKLMYEDSQRPVPRPLNKLQGFIFDVVTS. An IV repeat occupies 1233–1531; that stretch reads VPRPLNKLQG…WKRFDPDRTQ (299 aa). A helical membrane pass occupies residues 1251-1272; the sequence is QAFNVIVMVLICFQAIAMMIDT. The Extracellular portion of the chain corresponds to 1273–1276; it reads DVQS. Residues 1277–1305 form a helical membrane-spanning segment; the sequence is LQMSIALYWINSIFVMLYTMECILKLIAF. Over 1306-1312 the chain is Cytoplasmic; sequence RCFYFTI. Residues 1313 to 1338 form a helical membrane-spanning segment; that stretch reads AWNIFDFMVVIFSITGLCLPMTVGSY. Residues 1339-1341 are Extracellular-facing; that stretch reads LVP. Residues 1342 to 1362 form a helical membrane-spanning segment; it reads PSLVQLILLSRIIHMLRLGKG. Over 1363–1377 the chain is Cytoplasmic; sequence PKVFHNLMLPLMLSL. A helical membrane pass occupies residues 1378 to 1402; it reads PALLNIILLIFLVMFIYAVFGMYNF. At 1403–1420 the chain is on the extracellular side; that stretch reads AYVKKEAGINDVSNFETF. The pore-forming intramembrane region spans 1421 to 1444; the sequence is GNSMLCLFQVAIFAGWDGMLDAIF. The Extracellular segment spans residues 1445–1468; that stretch reads NSKWSDCDPDKINPGTQVRGDCGN. A disulfide bond links C1451 and C1466. The chain crosses the membrane as a helical span at residues 1469-1504; the sequence is PSVGIFYFVSYILISWLIIVNMYIVVVMEFLNIASK. The Cytoplasmic segment spans residues 1505-1682; it reads KKNKTLSEDD…KEKSPIQSQI (178 aa).

This sequence belongs to the sodium channel (TC 1.A.1.10) family. SCN7A subfamily. In terms of assembly, the sodium channel formed by SCN7A is probably a heterooligomeric complex consisting of the ion conducting pore forming alpha subunit SCN7A and regulatory beta subunits such as SCN3B. Interacts with ATP1A1; activates ATP1A1 and thereby indirectly signals to nearby neurons to regulate sodium homeostasis. As to expression, heart and uterus.

It is found in the cell membrane. The enzyme catalyses Na(+)(in) = Na(+)(out). Its function is as follows. Sodium leak channel functioning as an osmosensor regulating sodium ion levels in various tissues and organs. While most sodium channels are voltage-gated, SCN7A is not and lets sodium flow through membrane along its concentration gradient. In glial cells of the central nervous system, senses body-fluid sodium levels and controls salt intake behavior as well as voluntary water intake through activation of nearby neurons to maintain appropriate sodium levels in the body. By mediating sodium influx into keratinocytes, also plays a role in skin barrier homeostasis. The polypeptide is Sodium channel protein type 7 subunit alpha (Homo sapiens (Human)).